Consider the following 461-residue polypeptide: L-seryl-tRNA(Sec) selenium transferase (461 aa).

Lys294 carries the N6-(pyridoxal phosphate)lysine modification.

Belongs to the SelA family. Requires pyridoxal 5'-phosphate as cofactor.

The protein resides in the cytoplasm. The enzyme catalyses L-seryl-tRNA(Sec) + selenophosphate + H(+) = L-selenocysteinyl-tRNA(Sec) + phosphate. The protein operates within aminoacyl-tRNA biosynthesis; selenocysteinyl-tRNA(Sec) biosynthesis; selenocysteinyl-tRNA(Sec) from L-seryl-tRNA(Sec) (bacterial route): step 1/1. Converts seryl-tRNA(Sec) to selenocysteinyl-tRNA(Sec) required for selenoprotein biosynthesis. This is L-seryl-tRNA(Sec) selenium transferase from Haemophilus influenzae (strain 86-028NP).